A 293-amino-acid chain; its full sequence is Pyridoxal 5'-phosphate synthase subunit PdxS (293 aa).

Asp23 is a binding site for D-ribose 5-phosphate. The Schiff-base intermediate with D-ribose 5-phosphate role is filled by Lys80. A D-ribose 5-phosphate-binding site is contributed by Gly152. A D-glyceraldehyde 3-phosphate-binding site is contributed by Arg164. D-ribose 5-phosphate is bound by residues Gly213 and 234–235 (GS).

This sequence belongs to the PdxS/SNZ family. In terms of assembly, in the presence of PdxT, forms a dodecamer of heterodimers.

It catalyses the reaction aldehydo-D-ribose 5-phosphate + D-glyceraldehyde 3-phosphate + L-glutamine = pyridoxal 5'-phosphate + L-glutamate + phosphate + 3 H2O + H(+). The protein operates within cofactor biosynthesis; pyridoxal 5'-phosphate biosynthesis. In terms of biological role, catalyzes the formation of pyridoxal 5'-phosphate from ribose 5-phosphate (RBP), glyceraldehyde 3-phosphate (G3P) and ammonia. The ammonia is provided by the PdxT subunit. Can also use ribulose 5-phosphate and dihydroxyacetone phosphate as substrates, resulting from enzyme-catalyzed isomerization of RBP and G3P, respectively. This Desulfovibrio desulfuricans (strain ATCC 27774 / DSM 6949 / MB) protein is Pyridoxal 5'-phosphate synthase subunit PdxS.